Consider the following 156-residue polypeptide: Ribosomal RNA large subunit methyltransferase H (156 aa).

S-adenosyl-L-methionine-binding positions include L73, G104, and 123-128; that span reads LSSLTL.

It belongs to the RNA methyltransferase RlmH family. As to quaternary structure, homodimer.

It localises to the cytoplasm. It catalyses the reaction pseudouridine(1915) in 23S rRNA + S-adenosyl-L-methionine = N(3)-methylpseudouridine(1915) in 23S rRNA + S-adenosyl-L-homocysteine + H(+). Functionally, specifically methylates the pseudouridine at position 1915 (m3Psi1915) in 23S rRNA. The sequence is that of Ribosomal RNA large subunit methyltransferase H from Ralstonia pickettii (strain 12J).